A 223-amino-acid polypeptide reads, in one-letter code: Phosphoribosylformylglycinamidine synthase subunit PurQ (223 aa).

One can recognise a Glutamine amidotransferase type-1 domain in the interval 2–223 (KIAVVVFPGS…KSLLKAGVQA (222 aa)). C86 serves as the catalytic Nucleophile. Catalysis depends on residues H195 and E197.

In terms of assembly, part of the FGAM synthase complex composed of 1 PurL, 1 PurQ and 2 PurS subunits.

It localises to the cytoplasm. The enzyme catalyses N(2)-formyl-N(1)-(5-phospho-beta-D-ribosyl)glycinamide + L-glutamine + ATP + H2O = 2-formamido-N(1)-(5-O-phospho-beta-D-ribosyl)acetamidine + L-glutamate + ADP + phosphate + H(+). It carries out the reaction L-glutamine + H2O = L-glutamate + NH4(+). It functions in the pathway purine metabolism; IMP biosynthesis via de novo pathway; 5-amino-1-(5-phospho-D-ribosyl)imidazole from N(2)-formyl-N(1)-(5-phospho-D-ribosyl)glycinamide: step 1/2. Its function is as follows. Part of the phosphoribosylformylglycinamidine synthase complex involved in the purines biosynthetic pathway. Catalyzes the ATP-dependent conversion of formylglycinamide ribonucleotide (FGAR) and glutamine to yield formylglycinamidine ribonucleotide (FGAM) and glutamate. The FGAM synthase complex is composed of three subunits. PurQ produces an ammonia molecule by converting glutamine to glutamate. PurL transfers the ammonia molecule to FGAR to form FGAM in an ATP-dependent manner. PurS interacts with PurQ and PurL and is thought to assist in the transfer of the ammonia molecule from PurQ to PurL. The sequence is that of Phosphoribosylformylglycinamidine synthase subunit PurQ from Lactobacillus acidophilus (strain ATCC 700396 / NCK56 / N2 / NCFM).